The following is a 33-amino-acid chain: Cytochrome b6-f complex subunit 8 (33 aa).

A helical transmembrane segment spans residues Leu2 to Val22.

The protein belongs to the PetN family. The 4 large subunits of the cytochrome b6-f complex are cytochrome b6, subunit IV (17 kDa polypeptide, PetD), cytochrome f and the Rieske protein, while the 4 small subunits are PetG, PetL, PetM and PetN. The complex functions as a dimer.

The protein localises to the cellular thylakoid membrane. Its function is as follows. Component of the cytochrome b6-f complex, which mediates electron transfer between photosystem II (PSII) and photosystem I (PSI), cyclic electron flow around PSI, and state transitions. The chain is Cytochrome b6-f complex subunit 8 from Synechococcus sp. (strain RCC307).